Reading from the N-terminus, the 148-residue chain is Lysozyme C (148 aa).

The signal sequence occupies residues 1 to 18 (MKALIVLGLVLLSVTVQG). In terms of domain architecture, C-type lysozyme spans 19–148 (KVFERCELAR…VRQYVQGCGV (130 aa)). Cystine bridges form between C24-C146, C48-C134, C83-C99, and C95-C113. Catalysis depends on residues E53 and D71.

The protein belongs to the glycosyl hydrolase 22 family. As to quaternary structure, monomer.

Its subcellular location is the secreted. The catalysed reaction is Hydrolysis of (1-&gt;4)-beta-linkages between N-acetylmuramic acid and N-acetyl-D-glucosamine residues in a peptidoglycan and between N-acetyl-D-glucosamine residues in chitodextrins.. Its function is as follows. Lysozymes have primarily a bacteriolytic function; those in tissues and body fluids are associated with the monocyte-macrophage system and enhance the activity of immunoagents. The sequence is that of Lysozyme C (LYZ) from Homo sapiens (Human).